A 488-amino-acid chain; its full sequence is RuvB-like helicase 1 (488 aa).

Residues Met1–Met11 are compositionally biased toward polar residues. Residues Met1–Glu29 are disordered. Gly87–Thr94 provides a ligand contact to ATP.

Belongs to the RuvB family. In terms of assembly, may form heterododecamers with RVB2. Component of the SWR1 chromatin remodeling complex, the INO80 chromatin remodeling complex, and of the R2TP complex.

It localises to the nucleus. It carries out the reaction ATP + H2O = ADP + phosphate + H(+). Functionally, DNA helicase which participates in several chromatin remodeling complexes, including the SWR1 and the INO80 complexes. The SWR1 complex mediates the ATP-dependent exchange of histone H2A for the H2A variant HZT1 leading to transcriptional regulation of selected genes by chromatin remodeling. The INO80 complex remodels chromatin by shifting nucleosomes and is involved in DNA repair. Also involved in pre-rRNA processing. This Mycosarcoma maydis (Corn smut fungus) protein is RuvB-like helicase 1 (RVB1).